A 434-amino-acid chain; its full sequence is Putative B3 domain-containing protein Os04g0347400 (434 aa).

3 DNA-binding regions (TF-B3) span residues 27-124 (SFHK…FDTT), 150-246 (KPQF…FGIN), and 326-432 (WIKK…DRVE).

Its subcellular location is the nucleus. The protein is Putative B3 domain-containing protein Os04g0347400 of Oryza sativa subsp. japonica (Rice).